A 568-amino-acid polypeptide reads, in one-letter code: Vacuolar protein 8 (568 aa).

Gly-2 carries the N-myristoyl glycine lipid modification. 3 S-palmitoyl cysteine lipidation sites follow: Cys-4, Cys-5, and Cys-7. 9 ARM repeats span residues 37-74 (DKDN…FAEI), 75-114 (TEKY…NLAV), 116-155 (NENK…NLAT), 157-196 (DDNK…NMTH), 198-237 (GENR…NIAV), 241-280 (NRRK…NLAS), 282-321 (TGYQ…NISI), 323-363 (PLNE…NLAA), and 407-446 (DNSK…NLCS).

The protein belongs to the beta-catenin family.

The protein localises to the vacuole membrane. Functionally, functions in both vacuole inheritance and protein targeting from the cytoplasm to vacuole. This Eremothecium gossypii (strain ATCC 10895 / CBS 109.51 / FGSC 9923 / NRRL Y-1056) (Yeast) protein is Vacuolar protein 8 (VAC8).